We begin with the raw amino-acid sequence, 221 residues long: Endonuclease V (221 aa).

D44 and D112 together coordinate Mg(2+).

The protein belongs to the endonuclease V family. It depends on Mg(2+) as a cofactor.

The protein localises to the cytoplasm. It catalyses the reaction Endonucleolytic cleavage at apurinic or apyrimidinic sites to products with a 5'-phosphate.. DNA repair enzyme involved in the repair of deaminated bases. Selectively cleaves double-stranded DNA at the second phosphodiester bond 3' to a deoxyinosine leaving behind the intact lesion on the nicked DNA. The sequence is that of Endonuclease V from Nostoc sp. (strain PCC 7120 / SAG 25.82 / UTEX 2576).